Here is a 337-residue protein sequence, read N- to C-terminus: Palmitoyltransferase ZDHHC15 (337 aa).

Over 1–20 the chain is Cytoplasmic; sequence MRRGWKMALSGGLRCCRRVL. The helical transmembrane segment at 21-41 threads the bilayer; sequence SWVPVLVIVLVVLWSYYAYVF. The Lumenal portion of the chain corresponds to 42-56; sequence ELCLVTVLSPAEKVI. Residues 57-77 form a helical membrane-spanning segment; it reads YLILYHAIFVFFTWTYWKSIF. At 78–172 the chain is on the cytoplasmic side; it reads TLPQQPNQKF…NNCIGFSNYK (95 aa). The DHHC domain maps to 129 to 179; that stretch reads RFCDRCHLIKPDRCHHCSVCAMCVLKMDHHCPWVNNCIGFSNYKFFLQFLA. Zn(2+) contacts are provided by cysteine 131, cysteine 134, histidine 144, cysteine 145, cysteine 148, cysteine 151, and histidine 158. Cysteine 159 functions as the S-palmitoyl cysteine intermediate in the catalytic mechanism. Cysteine 165 serves as a coordination point for Zn(2+). Residues 173–193 traverse the membrane as a helical segment; it reads FFLQFLAYSVLYCLYIATTVF. Over 194–210 the chain is Lumenal; that stretch reads SYFIKYWRGELPSVRSK. The chain crosses the membrane as a helical span at residues 211–234; sequence FHVLFLLFVACMFFVSLVILFGYH. Residues 235–337 are Cytoplasmic-facing; it reads CWLVSRNKTT…SSSLAVETET (103 aa). The disordered stretch occupies residues 306–337; that stretch reads PLLANEETWEDNEDDNQDYPEGSSSLAVETET. Over residues 312-323 the composition is skewed to acidic residues; the sequence is ETWEDNEDDNQD. The span at 327-337 shows a compositional bias: polar residues; that stretch reads GSSSLAVETET.

The protein belongs to the DHHC palmitoyltransferase family. Post-translationally, autopalmitoylated (in vitro). Expressed in placenta, liver, lung, kidney, heart and brain.

Its subcellular location is the golgi apparatus membrane. It is found in the postsynaptic density. The enzyme catalyses L-cysteinyl-[protein] + hexadecanoyl-CoA = S-hexadecanoyl-L-cysteinyl-[protein] + CoA. The catalysed reaction is L-cysteinyl-[protein] + tetradecanoyl-CoA = S-tetradecanoyl-L-cysteinyl-[protein] + CoA. It catalyses the reaction L-cysteinyl-[protein] + octadecanoyl-CoA = S-octadecanoyl-L-cysteinyl-[protein] + CoA. Functionally, palmitoyltransferase that catalyzes the addition of palmitate onto various protein substrates. Has no stringent fatty acid selectivity and in addition to palmitate can also transfer onto target proteins myristate from tetradecanoyl-CoA and stearate from octadecanoyl-CoA. Palmitoylates IGF2R and SORT1, promoting their partitioning to an endosomal membrane subdomain where they can interact with the retromer cargo-selective complex. Thereby, regulates retrograde transport from endosomes to the Golgi apparatus of these lysosomal sorting receptors and plays a role in trafficking of lysosomal proteins. In the nervous system, catalyzes the palmitoylation of DLG4/PSD95 and regulates its synaptic clustering and function in synaptogenesis. Could be involved in the differentiation of dopaminergic neurons and the development of the diencephalon. Could also catalyze the palmitoylation of GAP43. Could also palmitoylate DNAJC5 and regulate its localization to the Golgi membrane. Could also palmitoylate FYN as shown in vitro. May palmitoylate CALHM3 subunit of gustatory voltage-gated ion channels and modulate channel gating and kinetics. The protein is Palmitoyltransferase ZDHHC15 of Homo sapiens (Human).